We begin with the raw amino-acid sequence, 162 residues long: Nucleotide-binding protein CHU_2278 (162 aa).

Belongs to the YajQ family.

Functionally, nucleotide-binding protein. The sequence is that of Nucleotide-binding protein CHU_2278 from Cytophaga hutchinsonii (strain ATCC 33406 / DSM 1761 / CIP 103989 / NBRC 15051 / NCIMB 9469 / D465).